Reading from the N-terminus, the 202-residue chain is Dephospho-CoA kinase (202 aa).

In terms of domain architecture, DPCK spans 6-202; the sequence is KVSITGDLSS…EYFYALKGAL (197 aa). An ATP-binding site is contributed by 14-19; that stretch reads SSGKTE.

It belongs to the CoaE family.

The protein localises to the cytoplasm. It catalyses the reaction 3'-dephospho-CoA + ATP = ADP + CoA + H(+). The protein operates within cofactor biosynthesis; coenzyme A biosynthesis; CoA from (R)-pantothenate: step 5/5. Catalyzes the phosphorylation of the 3'-hydroxyl group of dephosphocoenzyme A to form coenzyme A. The sequence is that of Dephospho-CoA kinase from Chlamydia abortus (strain DSM 27085 / S26/3) (Chlamydophila abortus).